We begin with the raw amino-acid sequence, 333 residues long: DNA-directed RNA polymerase subunit alpha (333 aa).

An alpha N-terminal domain (alpha-NTD) region spans residues 1 to 233 (MVQEKLRFST…DLFIPFLHAE (233 aa)). The segment at 266–333 (KKEIALKSIF…DILKIQKYFT (68 aa)) is alpha C-terminal domain (alpha-CTD).

This sequence belongs to the RNA polymerase alpha chain family. As to quaternary structure, in plastids the minimal PEP RNA polymerase catalytic core is composed of four subunits: alpha, beta, beta', and beta''. When a (nuclear-encoded) sigma factor is associated with the core the holoenzyme is formed, which can initiate transcription.

It localises to the plastid. The protein localises to the chloroplast. The enzyme catalyses RNA(n) + a ribonucleoside 5'-triphosphate = RNA(n+1) + diphosphate. In terms of biological role, DNA-dependent RNA polymerase catalyzes the transcription of DNA into RNA using the four ribonucleoside triphosphates as substrates. The sequence is that of DNA-directed RNA polymerase subunit alpha from Phaseolus angularis (Azuki bean).